The primary structure comprises 817 residues: MSETFAKRASRRGYDPRAIEERWQRRWAETGLYKTDEDPSKPKHYALTMLPYPSGDLHVGHWYAMTPSDTRARFMRMRGYRVFFPIGFDAFGLPAENAAIKRGIHPRDWTYSNIERMRGQLRQMGTMFDFDAEVVTCDPEYYRWNQWFFLKFYEKGLAYREKAPVDWCPSCNTTLAREQVVGPDRRCERCDTPVIKRNLAQWLFKITDYAEELLDFSEIEWPERVKALQRNWIGRSEGAEIEFEIEGYGGVTVFTTRPDTLFGATFFVVAPEHPAVESITTPERGEEVRAYVERAARMSEIDRADVTREKTGVFTGAYAVNPANGERIPVYVADYVLMGYGTGAIMAVPAHDERDFEFAKKHGIEIRTVIAPPDWDGSPLERAYVGEGQMVNSGPFDGTPSAEGREKVTGWLRERGVGRPAVNYRLRDWLISRQRYWGTPIPIVYCERCGTVPVPEEDLPVLLPEDAEFMPTGESPLKFNDEFRKTECPRCGGPAERETDTMDTFVDSSWYQYRYLSPHYEEGPFDPERGSRWLPVDQYTGGIEHATMHLLYTRFFTKVMRDLGLVDFDEPMLRLFNQGVILGPDGNRMSKSRGNVVNPQEYVDRYGSDVLRCYLMFIGPWDEGGPWDPGGIEGVARWLRRAFTLVAGGDVSEAEADPGELSRRTHRLVKRVTEYLEGFRFNTAIAALMEHTNYLLAVKGEVGEEEWREAMRSFLLVLAPFAPHHAEEMWEILGEEYSVHEQGWPSWDEELVREETVTLVVQVNGKLRDRVEAPAGVDEGRARELALSSERVRAHVEGRELRKTVYVPGRLINLVVS.

Residues 51–61 carry the 'HIGH' region motif; the sequence is PYPSGDLHVGH. A 'KMSKS' region motif is present at residues 588–592; sequence RMSKS. An ATP-binding site is contributed by Lys-591.

The protein belongs to the class-I aminoacyl-tRNA synthetase family.

It localises to the cytoplasm. It carries out the reaction tRNA(Leu) + L-leucine + ATP = L-leucyl-tRNA(Leu) + AMP + diphosphate. This Rubrobacter xylanophilus (strain DSM 9941 / JCM 11954 / NBRC 16129 / PRD-1) protein is Leucine--tRNA ligase.